A 400-amino-acid chain; its full sequence is Dual specificity mitogen-activated protein kinase kinase 2 (400 aa).

M1 is subject to N-acetylmethionine. Residue S23 is modified to Phosphoserine. The region spanning 72-369 (FERISELGAG…LKMLMSHTFI (298 aa)) is the Protein kinase domain. ATP-binding positions include 78-86 (LGAGNGGVV) and K101. Catalysis depends on D194, which acts as the Proton acceptor. At S222 the chain carries Phosphoserine; by RAF. Phosphoserine occurs at positions 226, 293, 295, and 306. The segment at 288 to 309 (EGEPHSISPRPRPPGRPISGHG) is disordered. A phosphothreonine mark is found at T394 and T396.

This sequence belongs to the protein kinase superfamily. STE Ser/Thr protein kinase family. MAP kinase kinase subfamily. As to quaternary structure, interacts with MORG1. Interacts with SGK1. Interacts with KSR1. Interacts with KSR1 and BRAF; the interaction with KSR1 mediates KSR1-BRAF dimerization. Interacts with GLS. The cofactor is Mg(2+). In terms of processing, MAPKK is itself dependent on Ser/Thr phosphorylation for activity catalyzed by MAP kinase kinase kinases (RAF or MEKK1).

Its subcellular location is the cytoplasm. It is found in the membrane. The catalysed reaction is L-seryl-[protein] + ATP = O-phospho-L-seryl-[protein] + ADP + H(+). It carries out the reaction L-threonyl-[protein] + ATP = O-phospho-L-threonyl-[protein] + ADP + H(+). The enzyme catalyses L-tyrosyl-[protein] + ATP = O-phospho-L-tyrosyl-[protein] + ADP + H(+). Its function is as follows. Catalyzes the concomitant phosphorylation of a threonine and a tyrosine residue in a Thr-Glu-Tyr sequence located in MAP kinases. Activates the ERK1 and ERK2 MAP kinases. Activates BRAF in a KSR1 or KSR2-dependent manner; by binding to KSR1 or KSR2 releases the inhibitory intramolecular interaction between KSR1 or KSR2 protein kinase and N-terminal domains which promotes KSR1 or KSR2-BRAF dimerization and BRAF activation. The sequence is that of Dual specificity mitogen-activated protein kinase kinase 2 (MAP2K2) from Canis lupus familiaris (Dog).